The chain runs to 543 residues: MAVSERRGLGRGSPAEWGQRLLLVLLLGGCSGRIHQLALTGEKRADIQLNSFGFYTNGSLEVELSVLRLGLREAEEKSLLVGFSLSRVRSGRVRSYSTRDFQDCPLQKNSSSFLVLFLINTKDLQVQVRKYGEQKTLFIFPGLLPEAPSKPGLPKPQATVPRKVDGGGTSAASKPKSTPAVIQGPSGKDKDLVLGLSHLNNSYNFSFHVVIGSQAEEGQYSLNFHNCNNSVPGKEHPFDITVMIREKNPDGFLSAAEMPLFKLYMVMSACFLAAGIFWVSILCRNTYSVFKIHWLMAALAFTKSISLLFHSINYYFINSQGHPIEGLAVMYYIAHLLKGALLFITIALIGSGWAFIKYVLSDKEKKVFGIVIPMQVLANVAYIIIESREEGASDYVLWKEILFLVDLICCGAILFPVVWSIRHLQDASGTDGKVAVNLAKLKLFRHYYVMVICYVYFTRIIAILLQVAVPFQWQWLYQLLVEGSTLAFFVLTGYKFQPTGNNPYLQLPQEDEEDVQMEQVMTDSGFREGLSKVNKTASGRELL.

The signal sequence occupies residues 1 to 32; the sequence is MAVSERRGLGRGSPAEWGQRLLLVLLLGGCSG. N-linked (GlcNAc...) asparagine glycosylation is found at Asn57 and Asn109. The tract at residues 149–186 is disordered; it reads SKPGLPKPQATVPRKVDGGGTSAASKPKSTPAVIQGPS. 3 N-linked (GlcNAc...) asparagine glycosylation sites follow: Asn200, Asn204, and Asn228. The next 7 helical transmembrane spans lie at 263-283, 292-312, 336-356, 367-387, 401-421, 449-469, and 473-493; these read LYMV…SILC, IHWL…FHSI, LLKG…WAFI, VFGI…IIES, ILFL…VWSI, VMVI…QVAV, and WQWL…VLTG. Asn534 carries N-linked (GlcNAc...) asparagine glycosylation.

The protein belongs to the LU7TM family.

Its subcellular location is the golgi apparatus. It localises to the cis-Golgi network membrane. The protein localises to the trans-Golgi network membrane. It is found in the golgi apparatus membrane. Its function is as follows. May play a role in intracellular immune modulation by activating NF-kappaB response and attenuating Toll-like-receptor response. Functionally, (Microbial infection) Plays an essential function in adeno-associated virus (AAV) transduction across multiple serotypes except AAV5. May play a critical role in mediating the endosomal virus escape or in the AAV virions trafficking from endosomes to the nucleus. This is Protein GPR108 from Homo sapiens (Human).